The primary structure comprises 1276 residues: MLRWLTLLSCILLTALHGNIVEDVGAAQQASYPPPPPPFPFNVIVILPKRESTYDNFGMTLQKAMPVIDIAVQEVIKAKKLPPGWINLTYWDSRLYEDILLAERHATVGVIQAYCEHRLDAILGFADNYGLATVTKVTAGLNGGIPILTTSGMPSLLNSKKEYPFLTRMQGSYRLLADSMYQLIAYHDEDSVSKSNSSLNYLNLIFFYHDKRRAVNRVIAQDESQETGATSSHCYFSLYAIKRYFTEKSKTFKREWALNTPQFPFDEDLVIERETFKQWLREISLQSNVIILCASPDTVREIMLAAHDLGMATSGEYVFINIDVSTGSHAEQPWIRANDTNNEENEKAKEAYRALKTISLRRSDLDEYKNFELRVKERADQKYNYTNITGKDYEMNNFISAFYDAVLLYAIALNETIQSGLDPRNGHNITSRMWGRTFVGITGNVSIDHNGDRYSDYSLLDLDPVQNRFVEVAYYSGASNQLKTVGQLHWVGGKPPTDLPICGYDKSKCPGYPLHVYLLMGSFLLILVLVGLFIFFWRRYKLEQELAAMSWKIRWEELDGEESQKKNEKKKAKKRKNHNDYLPESDPLLRSTSRSSVNSDKFDEDSLIPIRFRLRSSSSGTTRKISAMIDRKLSIFTRKKSTPPSESQKNGGLTPNSLQKAENGDCSPINEVQFRLPLNDRRVSSPSSEATRKKNSNEEDPENGAKKSLSLKNRKLSFGMVSFKSGSGGSVETIAQNNTQIYTKTAIFKGVVVAIKKLNIDPKKYPRLDLSRAQLMELKKMKDLQHDHITRFTGACIDFPHYCVVTEYCPKGSLEDILENEKIELDKLMKYSLLHDLVKGLFFLHNSEIRSHGRLKSSNCVVDSRFVLKVTDFGLHRLHCLEEINLEEIGEHAYYKKMLWTAPELLRDSNAPPMGTQKGDIYSFAIILHEMMFRKGVFALENEDLSPNEIVQRVRKPVSEDQEPLRPWVSETGEGEGDDALNDTLLSLMVACWSEDPHERPEVSSVRKAVRSLNRDNETSNLVDNLLKRMEQYANNLEGLVEERTQEYLAEKKKVEELLHQLLPPAIADTLIAGRAVQAESYDCVTIYFSDIVGFTSLSSQSTPMQVVTLLNDLYLAFDGVVDNFKVYKVETIGDAYMVVSGLPERRDDHANQIAQMSLSLLHKVKNFVIRHRPHEQLKLRIGMHSGSVVAGVVGSKMPRYCLFGDTVNTSSRMESNGLPLKIHVSQQTYDILMQEAGFKLELRGSVEMKGKGMQTTYWLRGYKDVEIPDFGEEFA.

A signal peptide spans 1–18 (MLRWLTLLSCILLTALHG). Topologically, residues 19 to 515 (NIVEDVGAAQ…KSKCPGYPLH (497 aa)) are extracellular. N-linked (GlcNAc...) asparagine glycosylation is found at N87, N196, N338, N384, N387, N414, N428, and N444. Residues 516-536 (VYLLMGSFLLILVLVGLFIFF) traverse the membrane as a helical segment. The Cytoplasmic segment spans residues 537-1276 (WRRYKLEQEL…EIPDFGEEFA (740 aa)). 2 disordered regions span residues 562–601 (ESQKKNEKKKAKKRKNHNDYLPESDPLLRSTSRSSVNSDK) and 635–709 (IFTR…KKSL). Basic residues predominate over residues 567-577 (NEKKKAKKRKN). Composition is skewed to polar residues over residues 590–599 (RSTSRSSVNS) and 642–660 (TPPSESQKNGGLTPNSLQK). The Protein kinase domain occupies 717–1013 (SFGMVSFKSG…SSVRKAVRSL (297 aa)). ATP contacts are provided by residues 723-731 (FKSGSGGSV) and K756. The stretch at 1017-1063 (NETSNLVDNLLKRMEQYANNLEGLVEERTQEYLAEKKKVEELLHQLL) forms a coiled coil. Positions 1086-1215 (TIYFSDIVGF…DTVNTSSRME (130 aa)) constitute a Guanylate cyclase domain. Mg(2+)-binding residues include D1091, I1092, and D1135.

Belongs to the adenylyl cyclase class-4/guanylyl cyclase family. Expressed in head neurons, ventral cord and tail neurons, body wall muscle, hypodermis, somatic gonad and intestine. Isoform d is expressed specifically in AIA interneurons.

It localises to the cell membrane. The protein resides in the cell projection. Its subcellular location is the dendrite. The protein localises to the axon. It is found in the perikaryon. It catalyses the reaction GTP = 3',5'-cyclic GMP + diphosphate. In terms of biological role, guanylate cyclase involved in the production of the second messenger cGMP. Regulates olfactory perception in AWC sensory neurons although may not be involved in the primary sensory transduction steps. Its function is as follows. Isoforms c: Regulates sensory integration of conflicting sensory cues in AIA interneurons. Functionally, regulates sensory integration of conflicting sensory cues in AIA interneurons. This is Receptor-type guanylate cyclase gcy-28 from Caenorhabditis elegans.